We begin with the raw amino-acid sequence, 288 residues long: Glycine--tRNA ligase alpha subunit (288 aa).

It belongs to the class-II aminoacyl-tRNA synthetase family. In terms of assembly, tetramer of two alpha and two beta subunits.

The protein resides in the cytoplasm. The enzyme catalyses tRNA(Gly) + glycine + ATP = glycyl-tRNA(Gly) + AMP + diphosphate. This chain is Glycine--tRNA ligase alpha subunit, found in Desulfatibacillum aliphaticivorans.